An 86-amino-acid chain; its full sequence is MKKDIHPDYRPVVFLDTTTGYKFLSGSTKSTKETVEFEGETYPLIRVEISSDSHPFYTGRQKFTQADGRVDRFNKKYGLKDANAAQ.

This sequence belongs to the bacterial ribosomal protein bL31 family. Type B subfamily. As to quaternary structure, part of the 50S ribosomal subunit.

The sequence is that of Large ribosomal subunit protein bL31B from Streptococcus agalactiae serotype III (strain NEM316).